Consider the following 36-residue polypeptide: DNA binding protein ORF8 (36 aa).

This sequence belongs to the microviridae J protein family.

The protein localises to the virion. It is found in the host cytoplasm. Its function is as follows. Mediates ssDNA packaging into virion, it locates to the internal surface of the capsid. Additionally, plays a role in viral attachment to the host cell. The chain is DNA binding protein ORF8 from Chlamydia phage 1 (Bacteriophage Chp1).